Here is a 961-residue protein sequence, read N- to C-terminus: Probable inorganic carbon transporter subunit DabA (961 aa).

Cysteine 406, aspartate 408, histidine 653, and cysteine 668 together coordinate Zn(2+).

Belongs to the inorganic carbon transporter (TC 9.A.2) DabA family. Forms a complex with DabB. It depends on Zn(2+) as a cofactor.

The protein resides in the cell inner membrane. Functionally, part of an energy-coupled inorganic carbon pump. In Hydrogenobaculum sp. (strain Y04AAS1), this protein is Probable inorganic carbon transporter subunit DabA.